The following is a 161-amino-acid chain: Ferredoxin/F(420)H(2)-dependent CoB-CoM heterodisulfide reductase subunit C (161 aa).

4Fe-4S ferredoxin-type domains follow at residues 10 to 40 (KAEG…LNTR) and 51 to 82 (AAVL…TDAI). Residues cysteine 19, cysteine 22, cysteine 25, cysteine 29, cysteine 62, cysteine 65, cysteine 68, and cysteine 72 each contribute to the [4Fe-4S] cluster site.

This sequence belongs to the HdrC family. In terms of assembly, the ferredoxin/F(420)H(2)-dependent CoB-CoM heterodisulfide reductase is composed of three subunits; HdrA2, HdrB2 and HdrC2. [4Fe-4S] cluster serves as cofactor.

Its subcellular location is the cytoplasm. It carries out the reaction coenzyme B + coenzyme M + 2 oxidized [2Fe-2S]-[ferredoxin] = coenzyme M-coenzyme B heterodisulfide + 2 reduced [2Fe-2S]-[ferredoxin] + 2 H(+). The catalysed reaction is coenzyme B + 2 oxidized coenzyme F420-(gamma-L-Glu)(n) + coenzyme M + 2 reduced [2Fe-2S]-[ferredoxin] + 4 H(+) = coenzyme M-coenzyme B heterodisulfide + 2 reduced coenzyme F420-(gamma-L-Glu)(n) + 2 oxidized [2Fe-2S]-[ferredoxin]. The protein operates within cofactor metabolism; coenzyme M-coenzyme B heterodisulfide reduction; coenzyme B and coenzyme M from coenzyme M-coenzyme B heterodisulfide: step 1/1. Functionally, part of a complex that catalyzes the reversible reduction of CoM-S-S-CoB to the thiol-coenzymes H-S-CoM (coenzyme M) and H-S-CoB (coenzyme B). Catalyzes the transfer of electrons from ferredoxin to CoM-S-S-CoB during methanogenesis from acetate. Electrons transfer from ferredoxin to CoM-S-S-CoB via HdrA2, HdrC2 and HdrB2. In addition, the complex can use electron bifurcation to direct electron pairs from reduced coenzyme F420 towards the reduction of both ferredoxin and CoB-CoM heterodisulfide. This activity may take place during Fe(III)-dependent anaerobic methane oxidation. This is Ferredoxin/F(420)H(2)-dependent CoB-CoM heterodisulfide reductase subunit C from Methanosarcina acetivorans (strain ATCC 35395 / DSM 2834 / JCM 12185 / C2A).